A 228-amino-acid polypeptide reads, in one-letter code: 2-C-methyl-D-erythritol 4-phosphate cytidylyltransferase (228 aa).

The protein belongs to the IspD/TarI cytidylyltransferase family. IspD subfamily.

It catalyses the reaction 2-C-methyl-D-erythritol 4-phosphate + CTP + H(+) = 4-CDP-2-C-methyl-D-erythritol + diphosphate. It functions in the pathway isoprenoid biosynthesis; isopentenyl diphosphate biosynthesis via DXP pathway; isopentenyl diphosphate from 1-deoxy-D-xylulose 5-phosphate: step 2/6. Catalyzes the formation of 4-diphosphocytidyl-2-C-methyl-D-erythritol from CTP and 2-C-methyl-D-erythritol 4-phosphate (MEP). This Geobacillus kaustophilus (strain HTA426) protein is 2-C-methyl-D-erythritol 4-phosphate cytidylyltransferase.